The chain runs to 91 residues: MTDVMVVLKVFPEGDETDLEKVANELVSKLPEGYKLVRKETEPIAFGLKALVVYVSMPEKTEGGTDTLEELASSIEGVSHAEVVGITRLGF.

Belongs to the EF-1-beta/EF-1-delta family.

Promotes the exchange of GDP for GTP in EF-1-alpha/GDP, thus allowing the regeneration of EF-1-alpha/GTP that could then be used to form the ternary complex EF-1-alpha/GTP/AAtRNA. The protein is Elongation factor 1-beta of Metallosphaera sedula (strain ATCC 51363 / DSM 5348 / JCM 9185 / NBRC 15509 / TH2).